Here is a 1093-residue protein sequence, read N- to C-terminus: ATP-dependent helicase/deoxyribonuclease subunit B (1093 aa).

It belongs to the helicase family. AddB/RexB type 2 subfamily. In terms of assembly, heterodimer of AddA and RexB. Mg(2+) is required as a cofactor.

Functionally, the heterodimer acts as both an ATP-dependent DNA helicase and an ATP-dependent, dual-direction single-stranded exonuclease. Recognizes the chi site generating a DNA molecule suitable for the initiation of homologous recombination. This subunit has 5' -&gt; 3' nuclease activity but not helicase activity. The chain is ATP-dependent helicase/deoxyribonuclease subunit B from Streptococcus sanguinis (strain SK36).